The chain runs to 371 residues: Aminomethyltransferase (371 aa).

This sequence belongs to the GcvT family. The glycine cleavage system is composed of four proteins: P, T, L and H.

It carries out the reaction N(6)-[(R)-S(8)-aminomethyldihydrolipoyl]-L-lysyl-[protein] + (6S)-5,6,7,8-tetrahydrofolate = N(6)-[(R)-dihydrolipoyl]-L-lysyl-[protein] + (6R)-5,10-methylene-5,6,7,8-tetrahydrofolate + NH4(+). Functionally, the glycine cleavage system catalyzes the degradation of glycine. This Pectobacterium carotovorum subsp. carotovorum (strain PC1) protein is Aminomethyltransferase.